The following is a 302-amino-acid chain: Light-independent protochlorophyllide reductase iron-sulfur ATP-binding protein (302 aa).

ATP contacts are provided by residues 46–51 and lysine 75; that span reads GIGKST. Serine 50 lines the Mg(2+) pocket. Cysteine 131 and cysteine 165 together coordinate [4Fe-4S] cluster. 216–217 is an ATP binding site; it reads NR.

Belongs to the NifH/BchL/ChlL family. In terms of assembly, homodimer. Protochlorophyllide reductase is composed of three subunits; BchL, BchN and BchB. The cofactor is [4Fe-4S] cluster.

It catalyses the reaction chlorophyllide a + oxidized 2[4Fe-4S]-[ferredoxin] + 2 ADP + 2 phosphate = protochlorophyllide a + reduced 2[4Fe-4S]-[ferredoxin] + 2 ATP + 2 H2O. Its pathway is porphyrin-containing compound metabolism; bacteriochlorophyll biosynthesis (light-independent). Functionally, component of the dark-operative protochlorophyllide reductase (DPOR) that uses Mg-ATP and reduced ferredoxin to reduce ring D of protochlorophyllide (Pchlide) to form chlorophyllide a (Chlide). This reaction is light-independent. The L component serves as a unique electron donor to the NB-component of the complex, and binds Mg-ATP. The polypeptide is Light-independent protochlorophyllide reductase iron-sulfur ATP-binding protein (Methylocella silvestris (strain DSM 15510 / CIP 108128 / LMG 27833 / NCIMB 13906 / BL2)).